Here is a 65-residue protein sequence, read N- to C-terminus: Large ribosomal subunit protein bL35 (65 aa).

Belongs to the bacterial ribosomal protein bL35 family.

The chain is Large ribosomal subunit protein bL35 from Thermotoga neapolitana (strain ATCC 49049 / DSM 4359 / NBRC 107923 / NS-E).